A 1905-amino-acid polypeptide reads, in one-letter code: Low-density lipoprotein receptor-related protein 4 (1905 aa).

The signal sequence occupies residues 1–20 (MRRWWGALLLGALLCAHGIA). The Extracellular segment spans residues 21–1725 (SSLECACGRS…AAPGEGLHVS (1705 aa)). LDL-receptor class A domains follow at residues 26 to 67 (ACGR…DGCT), 70 to 106 (TCSP…QDCP), 109 to 144 (ECEE…EQCD), 147 to 183 (KCSD…ESCP), 190 to 226 (PCNL…SDCS), 230 to 266 (PCRS…RNCT), 269 to 305 (MCTA…ENCE), and 311 to 350 (QCAS…QNCR). Cystine bridges form between Cys27–Cys44, Cys34–Cys57, Cys51–Cys66, Cys71–Cys83, Cys78–Cys96, Cys90–Cys105, Cys110–Cys122, Cys117–Cys135, Cys129–Cys143, Cys148–Cys160, Cys155–Cys173, Cys167–Cys182, Cys191–Cys203, Cys198–Cys216, Cys210–Cys225, Cys231–Cys243, Cys238–Cys256, Cys250–Cys265, Cys270–Cys282, Cys277–Cys295, Cys289–Cys304, Cys312–Cys324, Cys319–Cys337, Cys331–Cys349, Cys358–Cys369, Cys365–Cys378, Cys380–Cys393, Cys399–Cys409, Cys405–Cys418, and Cys420–Cys433. The N-linked (GlcNAc...) asparagine glycan is linked to Asn264. The EGF-like 1; atypical domain maps to 354–394 (GEENCNVNNGGCAQKCQMVRGAVQCTCHTGYRLTEDGRTCQ). An EGF-like 2; calcium-binding domain is found at 395 to 434 (DVNECAEEGYCSQGCTNTEGAFQCWCEAGYELRPDRRSCK). LDL-receptor class B repeat units follow at residues 480–522 (ELVF…DWVH), 523–565 (DKLY…HPME), 566–609 (GTIY…DYAG), 610–652 (RRMY…FEDS), and 653–693 (LYWT…LHPQ). An N-linked (GlcNAc...) asparagine glycan is attached at Asn498. Residues 698–737 (GKNRCGDNNGGCTHLCLPSGQNYTCACPTGFRKINSHACA) form the EGF-like 3 domain. Disulfide bonds link Cys702-Cys713, Cys709-Cys722, and Cys724-Cys736. Residue Asn719 is glycosylated (N-linked (GlcNAc...) asparagine). 5 LDL-receptor class B repeats span residues 785–827 (DHVY…DWVT), 828–870 (NKLY…EPMG), 871–914 (GYMY…DYGS), 915–956 (QRLY…LYGQ), and 957–998 (RIYW…FHRQ). N-linked (GlcNAc...) asparagine glycosylation is present at Asn901. N-linked (GlcNAc...) asparagine glycosylation is present at Asn1077. LDL-receptor class B repeat units lie at residues 1093-1135 (GKVY…DAIG), 1136-1178 (RKVY…YHEM), 1179-1222 (GFMY…DKTS), 1223-1263 (SQLL…LLDS), 1264-1306 (YIYW…DRAQ), 1397-1439 (GKVY…DWVA), 1440-1482 (RNLY…FPRK), 1483-1526 (GYLF…DYDT), 1527-1568 (RRIY…QDRW), and 1569-1610 (IYWT…SPQR). Residues Asn1415 and Asn1467 are each glycosylated (N-linked (GlcNAc...) asparagine). Residues 1661–1696 (ATSMNEKSPVLPNTLPTTLHSSTTKTRTSLEGAGGR) are disordered. The segment covering 1674 to 1690 (TLPTTLHSSTTKTRTSL) has biased composition (low complexity). Residues 1726–1746 (YAIGGLLSILLILLVIAALML) traverse the membrane as a helical segment. Residues 1747-1905 (YRHRKSKFTD…ERKLSSESQV (159 aa)) lie on the Cytoplasmic side of the membrane. The segment at 1852–1905 (ASSGSLDDTETEQLLQEEQSECSSVHTAATPERRGSLPDTGWKHERKLSSESQV) is disordered. Residues 1882 to 1905 (PERRGSLPDTGWKHERKLSSESQV) are compositionally biased toward basic and acidic residues.

This sequence belongs to the LDLR family. In terms of assembly, homooligomer. Interacts with MUSK; the heterodimer forms an AGRIN receptor complex that binds AGRIN resulting in activation of MUSK. Interacts (via the extracellular domain) with SOST; the interaction facilitates the inhibition of Wnt signaling. Interacts with MESD; the interaction promotes glycosylation of LRP4 and its cell-surface expression. N-glycosylation is required for cell surface location.

The protein resides in the cell membrane. Functionally, mediates SOST-dependent inhibition of bone formation. Functions as a specific facilitator of SOST-mediated inhibition of Wnt signaling. Plays a key role in the formation and the maintenance of the neuromuscular junction (NMJ), the synapse between motor neuron and skeletal muscle. Directly binds AGRIN and recruits it to the MUSK signaling complex. Mediates the AGRIN-induced phosphorylation of MUSK, the kinase of the complex. The activation of MUSK in myotubes induces the formation of NMJ by regulating different processes including the transcription of specific genes and the clustering of AChR in the postsynaptic membrane. Alternatively, may be involved in the negative regulation of the canonical Wnt signaling pathway, being able to antagonize the LRP6-mediated activation of this pathway. More generally, has been proposed to function as a cell surface endocytic receptor binding and internalizing extracellular ligands for degradation by lysosomes. Plays an essential role in the process of digit differentiation. This Mus musculus (Mouse) protein is Low-density lipoprotein receptor-related protein 4 (Lrp4).